Here is a 741-residue protein sequence, read N- to C-terminus: NAD(P)H-quinone oxidoreductase subunit 5, chloroplastic (741 aa).

The next 16 helical transmembrane spans lie at 9 to 29 (WIIP…LLLF), 40 to 60 (WTFL…YLSI), 89 to 109 (IDPL…LVLI), 125 to 145 (FAYM…SNLI), 147 to 167 (VYFF…FWFT), 185 to 205 (GDFG…SFEF), 221 to 241 (VNLL…IAKS), 258 to 278 (TPIS…FLVA), 280 to 300 (LLPL…IGII), 327 to 347 (LGYM…FHLI), 354 to 374 (ALLF…VGYS), 396 to 416 (TAFL…CFWS), 425 to 445 (LLFS…TAFY), 547 to 567 (ILFP…IGIP), 602 to 622 (FLQN…IAYC), and 720 to 740 (ISSY…ILFY).

Belongs to the complex I subunit 5 family. As to quaternary structure, NDH is composed of at least 16 different subunits, 5 of which are encoded in the nucleus.

The protein resides in the plastid. Its subcellular location is the chloroplast thylakoid membrane. The enzyme catalyses a plastoquinone + NADH + (n+1) H(+)(in) = a plastoquinol + NAD(+) + n H(+)(out). It carries out the reaction a plastoquinone + NADPH + (n+1) H(+)(in) = a plastoquinol + NADP(+) + n H(+)(out). Functionally, NDH shuttles electrons from NAD(P)H:plastoquinone, via FMN and iron-sulfur (Fe-S) centers, to quinones in the photosynthetic chain and possibly in a chloroplast respiratory chain. The immediate electron acceptor for the enzyme in this species is believed to be plastoquinone. Couples the redox reaction to proton translocation, and thus conserves the redox energy in a proton gradient. This chain is NAD(P)H-quinone oxidoreductase subunit 5, chloroplastic (ndhF), found in Arabis hirsuta (Hairy rock-cress).